Here is a 583-residue protein sequence, read N- to C-terminus: Tetratricopeptide repeat protein 39C (583 aa).

A disordered region spans residues 1–22 (MAGSEQQRPRRRDDGDSDAAAA). TPR repeat units lie at residues 315-348 (SLFM…AVDQ), 353-386 (HVCL…SRWS), and 485-518 (GLKY…ELCR).

Belongs to the TTC39 family.

The sequence is that of Tetratricopeptide repeat protein 39C (TTC39C) from Homo sapiens (Human).